Here is a 318-residue protein sequence, read N- to C-terminus: Isoflavone reductase (318 aa).

Residues 11–17, Arg-36, and Lys-44 each bind NADP(+); that span reads GPTGAIG. The active-site Proton acceptor is the Lys-144. Residue Arg-148 coordinates NADP(+).

This sequence belongs to the NmrA-type oxidoreductase family. Isoflavone reductase subfamily.

The catalysed reaction is (3R)-vestitone + NADP(+) = 2'-hydroxyformononetin + NADPH + 2 H(+). It participates in phytoalexin biosynthesis; pterocarpan phytoalexin biosynthesis. In terms of biological role, reduces achiral isoflavones to chiral isoflavanones during the biosynthesis of chiral pterocarpan phytoalexins. The reduction product is a third isomer, which represents the penultimate intermediate in the synthesis of the phytoalexin (-)-medicarpin, the major phytoalexin in Alfalfa. The polypeptide is Isoflavone reductase (Medicago sativa (Alfalfa)).